We begin with the raw amino-acid sequence, 319 residues long: Sulfate adenylyltransferase subunit 2 (319 aa).

Belongs to the PAPS reductase family. CysD subfamily. As to quaternary structure, heterodimer composed of CysD, the smaller subunit, and CysN.

It carries out the reaction sulfate + ATP + H(+) = adenosine 5'-phosphosulfate + diphosphate. Its pathway is sulfur metabolism; hydrogen sulfide biosynthesis; sulfite from sulfate: step 1/3. Its function is as follows. With CysN forms the ATP sulfurylase (ATPS) that catalyzes the adenylation of sulfate producing adenosine 5'-phosphosulfate (APS) and diphosphate, the first enzymatic step in sulfur assimilation pathway. APS synthesis involves the formation of a high-energy phosphoric-sulfuric acid anhydride bond driven by GTP hydrolysis by CysN coupled to ATP hydrolysis by CysD. In Methylobacterium radiotolerans (strain ATCC 27329 / DSM 1819 / JCM 2831 / NBRC 15690 / NCIMB 10815 / 0-1), this protein is Sulfate adenylyltransferase subunit 2.